Here is a 281-residue protein sequence, read N- to C-terminus: Urease accessory protein UreD 2 (281 aa).

It belongs to the UreD family. In terms of assembly, ureD, UreF and UreG form a complex that acts as a GTP-hydrolysis-dependent molecular chaperone, activating the urease apoprotein by helping to assemble the nickel containing metallocenter of UreC. The UreE protein probably delivers the nickel.

It is found in the cytoplasm. Required for maturation of urease via the functional incorporation of the urease nickel metallocenter. The protein is Urease accessory protein UreD 2 of Pseudomonas syringae pv. syringae (strain B728a).